The sequence spans 513 residues: Probable E3 ubiquitin-protein ligase XBOS34 (513 aa).

ANK repeat units follow at residues 39–69, 75–104, and 108–137; these read EGKTPLMVASMRPDLINVVQVLIELGANVNA, YCGTALHHAAKKGLEQTVHLLLSHGANPFI, and DCHTALDLAREKGHVNVVRAIEGRISLFCG. 2 stretches are compositionally biased toward polar residues: residues 309–327 and 335–355; these read ITTTTATNDWGNPPSNSLN and SAPSKTSGQVPVVTSSSSTYN. 2 disordered regions span residues 309–378 and 423–455; these read ITTT…QNST and SADGGTAVSSAKPAENEGDAKPAESDANASNSG. The span at 361-378 shows a compositional bias: low complexity; that stretch reads GTSSGQSSSKHNKSQNST. Residues 436-446 are compositionally biased toward basic and acidic residues; sequence AENEGDAKPAE. The segment at 462-501 adopts an RING-type zinc-finger fold; sequence CVICLDAPVEGACIPCGHMAGCMSCLKDIESKKWGCPICR.

The catalysed reaction is S-ubiquitinyl-[E2 ubiquitin-conjugating enzyme]-L-cysteine + [acceptor protein]-L-lysine = [E2 ubiquitin-conjugating enzyme]-L-cysteine + N(6)-ubiquitinyl-[acceptor protein]-L-lysine.. The protein operates within protein modification; protein ubiquitination. The chain is Probable E3 ubiquitin-protein ligase XBOS34 (XBOS34) from Oryza sativa subsp. japonica (Rice).